The sequence spans 188 residues: Elongation factor P-like protein (188 aa).

This sequence belongs to the elongation factor P family.

The chain is Elongation factor P-like protein from Xanthomonas oryzae pv. oryzae (strain MAFF 311018).